The primary structure comprises 44 residues: Small ribosomal subunit protein eS7 (44 aa).

Residues lysine 18–serine 34 are compositionally biased toward basic residues. Positions lysine 18–isoleucine 44 are disordered.

Belongs to the eukaryotic ribosomal protein eS7 family. As to quaternary structure, component of the small ribosomal subunit.

It localises to the cytoplasm. The protein resides in the cytoskeleton. The protein localises to the microtubule organizing center. It is found in the centrosome. Its subcellular location is the nucleus. Its function is as follows. Component of the small ribosomal subunit. The ribosome is a large ribonucleoprotein complex responsible for the synthesis of proteins in the cell. Required for rRNA maturation. This is Small ribosomal subunit protein eS7 (rps7) from Salmo salar (Atlantic salmon).